Reading from the N-terminus, the 409-residue chain is Gamma-glutamyl phosphate reductase (409 aa).

Belongs to the gamma-glutamyl phosphate reductase family.

Its subcellular location is the cytoplasm. The enzyme catalyses L-glutamate 5-semialdehyde + phosphate + NADP(+) = L-glutamyl 5-phosphate + NADPH + H(+). It participates in amino-acid biosynthesis; L-proline biosynthesis; L-glutamate 5-semialdehyde from L-glutamate: step 2/2. Catalyzes the NADPH-dependent reduction of L-glutamate 5-phosphate into L-glutamate 5-semialdehyde and phosphate. The product spontaneously undergoes cyclization to form 1-pyrroline-5-carboxylate. This Bartonella tribocorum (strain CIP 105476 / IBS 506) protein is Gamma-glutamyl phosphate reductase.